We begin with the raw amino-acid sequence, 240 residues long: Cysteine-rich secretory protein (240 aa).

A signal peptide spans 1-19; that stretch reads MIAFIVLPILAAVLQQSSG. The SCP domain occupies 38-166; sequence VDLHNSLRRS…EYSYFYVCQY (129 aa). 8 cysteine pairs are disulfide-bonded: Cys75/Cys153, Cys92/Cys167, Cys148/Cys164, Cys186/Cys193, Cys189/Cys198, Cys202/Cys235, Cys211/Cys229, and Cys220/Cys233. Positions 202 to 235 constitute a ShKT domain; it reads CTKEDKYSNCKSLVQQAGCQDKQMQSDCSAICFC.

This sequence belongs to the CRISP family. Expressed by the venom gland.

It localises to the secreted. In terms of biological role, weakly blocks contraction of smooth muscle elicited by high potassium-induced depolarization, but does not block caffeine-stimulated contraction. May target voltage-gated calcium channels on smooth muscle. The protein is Cysteine-rich secretory protein of Crotalus adamanteus (Eastern diamondback rattlesnake).